Consider the following 131-residue polypeptide: Small ribosomal subunit protein uS8 (131 aa).

This sequence belongs to the universal ribosomal protein uS8 family. In terms of assembly, part of the 30S ribosomal subunit. Contacts proteins S5 and S12.

Functionally, one of the primary rRNA binding proteins, it binds directly to 16S rRNA central domain where it helps coordinate assembly of the platform of the 30S subunit. This chain is Small ribosomal subunit protein uS8, found in Methylobacillus flagellatus (strain ATCC 51484 / DSM 6875 / VKM B-1610 / KT).